The chain runs to 289 residues: Acetyl-coenzyme A carboxylase carboxyl transferase subunit beta (289 aa).

In terms of domain architecture, CoA carboxyltransferase N-terminal spans 28 to 289 (VMTKCPKCKK…QGGEMAVWQS (262 aa)). Zn(2+)-binding residues include Cys-32, Cys-35, Cys-51, and Cys-54. The C4-type zinc finger occupies 32–54 (CPKCKKIMYTKELLKNLKVCVNC).

The protein belongs to the AccD/PCCB family. Acetyl-CoA carboxylase is a heterohexamer composed of biotin carboxyl carrier protein (AccB), biotin carboxylase (AccC) and two subunits each of ACCase subunit alpha (AccA) and ACCase subunit beta (AccD). Zn(2+) is required as a cofactor.

It localises to the cytoplasm. The catalysed reaction is N(6)-carboxybiotinyl-L-lysyl-[protein] + acetyl-CoA = N(6)-biotinyl-L-lysyl-[protein] + malonyl-CoA. Its pathway is lipid metabolism; malonyl-CoA biosynthesis; malonyl-CoA from acetyl-CoA: step 1/1. Its function is as follows. Component of the acetyl coenzyme A carboxylase (ACC) complex. Biotin carboxylase (BC) catalyzes the carboxylation of biotin on its carrier protein (BCCP) and then the CO(2) group is transferred by the transcarboxylase to acetyl-CoA to form malonyl-CoA. This is Acetyl-coenzyme A carboxylase carboxyl transferase subunit beta from Bacillus cereus (strain AH187).